Here is a 1031-residue protein sequence, read N- to C-terminus: Telomerase reverse transcriptase (1031 aa).

Residues 498 to 852 form the Reverse transcriptase domain; that stretch reads KEVEEWKKSL…DYCDWIGISI (355 aa). Mg(2+)-binding residues include Asp-603, Asp-781, and Asp-782.

Belongs to the reverse transcriptase family. Telomerase subfamily. Component of the telomerase holoenzyme complex composed minimally of the catalytic subunit p123 and the telomerase RNA template component.

It localises to the nucleus. Its subcellular location is the chromosome. The protein resides in the telomere. The catalysed reaction is DNA(n) + a 2'-deoxyribonucleoside 5'-triphosphate = DNA(n+1) + diphosphate. Its function is as follows. Telomerase is a ribonucleoprotein enzyme essential for the replication of chromosome termini in most eukaryotes. It elongates telomeres. It is a reverse transcriptase that adds simple sequence repeats to chromosome ends by copying a template sequence within the RNA component of the enzyme. The sequence is that of Telomerase reverse transcriptase from Euplotes aediculatus (Ciliate).